The following is a 211-amino-acid chain: Transcription antitermination protein NusB (211 aa).

The protein belongs to the NusB family.

Its function is as follows. Involved in transcription antitermination. Required for transcription of ribosomal RNA (rRNA) genes. Binds specifically to the boxA antiterminator sequence of the ribosomal RNA (rrn) operons. The polypeptide is Transcription antitermination protein NusB (Trichormus variabilis (strain ATCC 29413 / PCC 7937) (Anabaena variabilis)).